Here is a 62-residue protein sequence, read N- to C-terminus: UPF0434 protein Rleg2_3773 (62 aa).

Belongs to the UPF0434 family.

The protein is UPF0434 protein Rleg2_3773 of Rhizobium leguminosarum bv. trifolii (strain WSM2304).